Reading from the N-terminus, the 138-residue chain is Holo-[acyl-carrier-protein] synthase (138 aa).

Mg(2+) contacts are provided by aspartate 8 and glutamate 60.

It belongs to the P-Pant transferase superfamily. AcpS family. Mg(2+) is required as a cofactor.

It localises to the cytoplasm. It carries out the reaction apo-[ACP] + CoA = holo-[ACP] + adenosine 3',5'-bisphosphate + H(+). In terms of biological role, transfers the 4'-phosphopantetheine moiety from coenzyme A to a Ser of acyl-carrier-protein. The sequence is that of Holo-[acyl-carrier-protein] synthase from Magnetococcus marinus (strain ATCC BAA-1437 / JCM 17883 / MC-1).